A 93-amino-acid chain; its full sequence is Large ribosomal subunit protein uL23cy (93 aa).

This sequence belongs to the universal ribosomal protein uL23 family. Part of the 50S ribosomal subunit.

Its subcellular location is the plastid. It localises to the chloroplast. Functionally, binds to 23S rRNA. The protein is Large ribosomal subunit protein uL23cy (rpl23-B) of Agrostis stolonifera (Creeping bentgrass).